Reading from the N-terminus, the 264-residue chain is Membrane-spanning 4-domains subfamily A member 10 (264 aa).

At 1-57 the chain is on the cytoplasmic side; the sequence is MKAEATVIPSRCARGQTTAAPGVQPWQTSVPQNTTQPKLLAPRQHEKSQKRSSLLKE. Residues 17–37 show a composition bias toward polar residues; it reads TTAAPGVQPWQTSVPQNTTQP. Residues 17 to 48 form a disordered region; the sequence is TTAAPGVQPWQTSVPQNTTQPKLLAPRQHEKS. Residues 58 to 78 traverse the membrane as a helical segment; sequence LGAFHITIALLHLVFGGYLAS. The Extracellular segment spans residues 79 to 89; the sequence is TVKSLHLVVLK. A helical transmembrane segment spans residues 90–110; it reads SWYPFWGAASFLISGILAITM. Topologically, residues 111–119 are cytoplasmic; it reads KTFSKTYLK. The chain crosses the membrane as a helical span at residues 120-140; sequence MLCLMTNLVSLFCVLSGLFVI. Residues 141-169 lie on the Extracellular side of the membrane; it reads SKDLFLESPFESPIWRMYPNSTVHIQRLE. A helical membrane pass occupies residues 170-190; sequence LALLCFTVLELFLPVPTAVTA. Topologically, residues 191–264 are cytoplasmic; sequence WRDRPSAKND…GAGIWTQTAN (74 aa).

This sequence belongs to the MS4A family.

The protein localises to the membrane. Functionally, may be involved in signal transduction as a component of a multimeric receptor complex. This is Membrane-spanning 4-domains subfamily A member 10 (MS4A10) from Pongo abelii (Sumatran orangutan).